Reading from the N-terminus, the 1374-residue chain is Protein Dicer (1374 aa).

The 188-residue stretch at 19 to 206 folds into the Helicase ATP-binding domain; that stretch reads VYNIASKQNT…YHRLYQWEQL (188 aa). 32-39 serves as a coordination point for ATP; that stretch reads MRTGAGKT. The DECH box signature appears at 145 to 148; the sequence is DECH. Residues 340–517 enclose the Helicase C-terminal domain; sequence DVTDKVFKLL…SLVCEERERV (178 aa). One can recognise a Dicer dsRNA-binding fold domain in the interval 537 to 628; the sequence is AVSLLYNFCN…KPLDFRRKIA (92 aa). 2 RNase III domains span residues 916–1038 and 1083–1233; these read QALT…LDSG and SSYI…LDSG. Mg(2+)-binding residues include E1123, D1219, and E1222. Positions 1263–1355 are C-terminal dsRNA-binding fold; sequence EHKVYQLLKD…LLYSCNCKFS (93 aa). Zn(2+) contacts are provided by C1275, H1312, C1350, and C1352.

Belongs to the helicase family. Dicer subfamily. Mg(2+) is required as a cofactor. Mn(2+) serves as cofactor.

The protein resides in the cytoplasm. The protein localises to the nucleus. Required for G1 arrest and mating in response to nitrogen starvation. Ago1 regulation of cytokinesis and cell cycle checkpoints occurs downstream of dcr1. Required, indirectly, for regulated hyperphosphorylation of cdc2. Its function is as follows. Has a role in the RNA interference (RNAi) pathway which is important for heterochromatin formation, accurate chromosome segregation, centromere cohesion and telomere function during mitosis and meiosis. Digests double-stranded RNA (dsRNA) producing 21 to 23 bp dsRNAs, so-called interfering RNAs (siRNA). Required for both post-transcriptional and transcriptional gene silencing. Required for silencing at the centromeres and for initiation of transcriptionally silent heterochromatin at the mating type locus. Promotes histone H3 'Lys-10' methylation necessary for centromere function. Required for recruitment of swi6 and cohesin to an ectopic dg repeat. This chain is Protein Dicer (dcr1), found in Schizosaccharomyces pombe (strain 972 / ATCC 24843) (Fission yeast).